Consider the following 362-residue polypeptide: Atypical chemokine receptor 3 (362 aa).

Over M1–K40 the chain is Extracellular. N-linked (GlcNAc...) asparagine glycosylation is found at N13, N22, and N39. A helical membrane pass occupies residues S41 to A61. Topologically, residues N62–C81 are cytoplasmic. A helical transmembrane segment spans residues Y82 to V102. At S103–K118 the chain is on the extracellular side. C117 and C196 are joined by a disulfide. A helical transmembrane segment spans residues V119 to S139. The Cytoplasmic portion of the chain corresponds to V140–R162. Residues V163–L183 form a helical membrane-spanning segment. The Extracellular portion of the chain corresponds to K184–E213. The chain crosses the membrane as a helical span at residues L214–L234. Residues L235–K252 are Cytoplasmic-facing. A helical membrane pass occupies residues I253–L273. At L274 to A296 the chain is on the extracellular side. Residues L297–N319 traverse the membrane as a helical segment. At R320–K362 the chain is on the cytoplasmic side. Residues Y324 to K362 are C-terminal cytoplasmic tail. Phosphoserine is present on residues S347, S350, and S355.

This sequence belongs to the G-protein coupled receptor 1 family. Atypical chemokine receptor subfamily. In terms of assembly, homodimer. Can form heterodimers with CXCR4; heterodimerization may regulate CXCR4 signaling activity. Interacts with ARRB1 and ARRB2. Post-translationally, the Ser/Thr residues in the C-terminal cytoplasmic tail may be phosphorylated. Ubiquitinated at the Lys residues in its C-terminal cytoplasmic tail and is essential for correct trafficking from and to the cell membrane. Deubiquitinated by CXCL12-stimulation in a reversible manner. Expressed in monocytes, basophils, B-cells, umbilical vein endothelial cells (HUVEC) and B-lymphoblastoid cells. Lower expression detected in CD4+ T-lymphocytes and natural killer cells. In the brain, detected in endothelial cells and capillaries, and in mature neurons of the frontal cortex and hippocampus. Expressed in tubular formation in the kidney. Highly expressed in astroglial tumor endothelial, microglial and glioma cells. Expressed at low levels in normal CD34+ progenitor cells, but at very high levels in several myeloid malignant cell lines. Expressed in breast carcinomas but not in normal breast tissue (at protein level).

The protein localises to the cell membrane. The protein resides in the early endosome. Its subcellular location is the recycling endosome. Its function is as follows. Atypical chemokine receptor that controls chemokine levels and localization via high-affinity chemokine binding that is uncoupled from classic ligand-driven signal transduction cascades, resulting instead in chemokine sequestration, degradation, or transcytosis. Also known as interceptor (internalizing receptor) or chemokine-scavenging receptor or chemokine decoy receptor. Acts as a receptor for chemokines CXCL11 and CXCL12/SDF1. Chemokine binding does not activate G-protein-mediated signal transduction but instead induces beta-arrestin recruitment, leading to ligand internalization and activation of MAPK signaling pathway. Required for regulation of CXCR4 protein levels in migrating interneurons, thereby adapting their chemokine responsiveness. In glioma cells, transduces signals via MEK/ERK pathway, mediating resistance to apoptosis. Promotes cell growth and survival. Not involved in cell migration, adhesion or proliferation of normal hematopoietic progenitors but activated by CXCL11 in malignant hemapoietic cells, leading to phosphorylation of ERK1/2 (MAPK3/MAPK1) and enhanced cell adhesion and migration. Plays a regulatory role in CXCR4-mediated activation of cell surface integrins by CXCL12. Required for heart valve development. Regulates axon guidance in the oculomotor system through the regulation of CXCL12 levels. Functionally, (Microbial infection) Acts as a coreceptor with CXCR4 for a restricted number of HIV isolates. The sequence is that of Atypical chemokine receptor 3 from Homo sapiens (Human).